Here is a 326-residue protein sequence, read N- to C-terminus: Transmembrane protein 255B (326 aa).

4 helical membrane-spanning segments follow: residues Leu26–Ala46, Val55–Ile75, Leu85–Val105, and Ala200–Phe220. Positions Leu284–Pro326 are disordered. Positions Gln305–Pro326 are enriched in pro residues.

This sequence belongs to the TMEM255 family.

The protein resides in the membrane. The chain is Transmembrane protein 255B (TMEM255B) from Homo sapiens (Human).